The sequence spans 357 residues: Protein RecA (357 aa).

67–74 (GPESSGKT) lines the ATP pocket. Positions 335-357 (LASSASDDESTEGNIDLETGEIF) are disordered.

Belongs to the RecA family.

The protein resides in the cytoplasm. Its function is as follows. Can catalyze the hydrolysis of ATP in the presence of single-stranded DNA, the ATP-dependent uptake of single-stranded DNA by duplex DNA, and the ATP-dependent hybridization of homologous single-stranded DNAs. It interacts with LexA causing its activation and leading to its autocatalytic cleavage. This is Protein RecA from Shewanella putrefaciens (strain CN-32 / ATCC BAA-453).